A 518-amino-acid chain; its full sequence is Sensory neuron membrane protein 1 (518 aa).

Residues 1 to 8 (MKTAEKLG) are Cytoplasmic-facing. Residues 9 to 29 (IIGTTISIFGIGFGWGVFPWL) traverse the membrane as a helical segment. The Extracellular segment spans residues 30-456 (IRMQIGRVSL…ELFRILQFLD (427 aa)). N-linked (GlcNAc...) asparagine glycans are attached at residues asparagine 64, asparagine 186, asparagine 225, asparagine 316, asparagine 334, and asparagine 381. 3 cysteine pairs are disulfide-bonded: cysteine 265/cysteine 330, cysteine 294/cysteine 349, and cysteine 332/cysteine 338. A helical membrane pass occupies residues 457–477 (VIKWVITLFGAGVVSGGVGLY). Topologically, residues 478 to 518 (YKEKNSLPITPTSSATSKKIDNPTDKTTTHELGHTNFGYIN) are cytoplasmic.

It belongs to the CD36 family.

Its subcellular location is the cell membrane. Its function is as follows. Plays an olfactory role that is not restricted to pheromone sensitivity. In Pediculus humanus subsp. corporis (Body louse), this protein is Sensory neuron membrane protein 1.